Reading from the N-terminus, the 256-residue chain is V-type proton ATPase subunit D (256 aa).

Positions 211 to 230 (QNETAKLDAEMKLKRDRAEQ) are enriched in basic and acidic residues. The disordered stretch occupies residues 211-256 (QNETAKLDAEMKLKRDRAEQDASEVAADEEPQGETLVADQEDDVIF).

Belongs to the V-ATPase D subunit family. As to quaternary structure, V-ATPase is a heteromultimeric enzyme composed of a peripheral catalytic V1 complex (components A to H) attached to an integral membrane V0 proton pore complex (components: a, c, c', c'', d, e, f and VOA1). Interacts with RAV1 and RAV2 components of the RAVE complex, which are essential for the stability and assembly of V-ATPase.

It is found in the vacuole membrane. Functionally, subunit of the V1 complex of vacuolar(H+)-ATPase (V-ATPase), a multisubunit enzyme composed of a peripheral complex (V1) that hydrolyzes ATP and a membrane integral complex (V0) that translocates protons. V-ATPase is responsible for acidifying and maintaining the pH of intracellular compartments. This chain is V-type proton ATPase subunit D, found in Saccharomyces cerevisiae (strain ATCC 204508 / S288c) (Baker's yeast).